The chain runs to 387 residues: Protein MGF 360-4L (387 aa).

Belongs to the asfivirus MGF 360 family.

Its function is as follows. Plays a role in virus cell tropism, and may be required for efficient virus replication in macrophages. In Ornithodoros (relapsing fever ticks), this protein is Protein MGF 360-4L.